The sequence spans 953 residues: MGKQVLDSGWLAARSTELELTGVQLTTTRPPSGTSAPWIEAVVPGTVLGTLLKNKLVPDPFYGLNNEGILDIYDSGREYYTFWFFKSFECKLSENQHVSLNFRAINYSAEVYLNGHKEILPKGMFRRHSIDITDILHPDGKNMLAVLVHPPDHPGQIPPEGGQGGDHEIGKDVATQYVEGWDWMAPIRDRNTGIWDEVSLYTSGPVKIADVHLVSSFFDMFRRAYLHSTVELENKSSWRAECSLTILVTTELDGDFNLIEYHQTHELSIPPESVIQYTLPPLFFYKPNLWWPNGMGKQSLYNVEITIAVKGFGDSDSWNNKFGFRQIESAIDEATGGRLFKVNGQRVFIRGGNWILSDGLLRLSKKRYMTDIKFHADMNFNMIRCWGGGLAERPEFYHYCDIYGLLVWQEFWITGDCDGRGIPVSNPNGPLDHALFLHCARDTIKLLRNHASLALWVGGNEQIPPEDINSALKNDLKLHPFFKHNGVTVIGEDMLSETEDPSQYLDGTRVYIQGSMWEGFANGKGDFTDGPYEIQNPEDFFKDDFYSYGFNPEVGSVGVPVAATIRATMPPEGWQIPLFKRLSDGFIEEVPNPIWEYHKYISYSKPGKVHDQIVLYGQPTNLDDFCEKAQLVNYVQYRALLEGWTSRMWTKYTGVLIWKTQNPWTGLRGQFYDHLHDQTAGFYGCRCAAEPVHVQLNLATYFIEVVNTTHEELSDVAIEVSVWDLDGTCPYYKVIENVLVSPKKVLPITELKYQGSKNAKPVYFVLLKLFRPSNTTILSRNFYWLRLPGTDFKLLEPYRAIEAPLKLTSEVNIVGSAYKIQMRVQNLSKNLNSESVNFLANDEKSDLSKKEGYISRICSGFKNSGTDSLRVVETKGTGSGVAFFLHFSVHAVKKDENEIEDLRILPVHYSDNYFSLVPGETTNISISFEVPHGVTPRVSLRGWNCSEEHYSVL.

Glutamate 461 serves as the catalytic Proton donor. Glutamate 553 acts as the Nucleophile in catalysis.

This sequence belongs to the glycosyl hydrolase 2 family. As to quaternary structure, heterotrimer of 31 kDa, 28 kDa and 42 kDa subunits. The mature enzyme is proteotically cleaved into 3 subunits of 31 kDa, 28 kDa and 42 kDa. In terms of tissue distribution, ubiquitously expressed.

The enzyme catalyses Hydrolysis of the alpha-D-mannosyl-(1-&gt;6)-beta-D-mannosyl-(1-&gt;4)-N-acetyl-beta-D-glucosaminyl-(1-&gt;4)-N-acetyl-beta-D-glucosaminyl sequence of glycoprotein to alpha-D-mannosyl-(1-&gt;6)-D-mannose and N-acetyl-beta-D-glucosaminyl-(1-&gt;4)-N-acetyl-beta-D-glucosaminyl sequences.. Glycosidase that specifically hydrolyzes the Man-beta-1,4-GlcNAc linkage in the trimannosyl core structure of N-glycans. Does not hydrolyzes pyridylamino derivatives sugar chains containing Man-alpha-1,3-Man-beta or Xylose-beta-1,2-Man-beta. This chain is Mannosylglycoprotein endo-beta-mannosidase (EBM), found in Lilium longiflorum (Trumpet lily).